Reading from the N-terminus, the 109-residue chain is Large ribosomal subunit protein uL22 (109 aa).

This sequence belongs to the universal ribosomal protein uL22 family. In terms of assembly, part of the 50S ribosomal subunit.

This protein binds specifically to 23S rRNA; its binding is stimulated by other ribosomal proteins, e.g. L4, L17, and L20. It is important during the early stages of 50S assembly. It makes multiple contacts with different domains of the 23S rRNA in the assembled 50S subunit and ribosome. In terms of biological role, the globular domain of the protein is located near the polypeptide exit tunnel on the outside of the subunit, while an extended beta-hairpin is found that lines the wall of the exit tunnel in the center of the 70S ribosome. The polypeptide is Large ribosomal subunit protein uL22 (Ralstonia pickettii (strain 12J)).